The following is a 709-amino-acid chain: Bud site selection protein 14 (709 aa).

Serine 2 is subject to N-acetylserine. Residues 61–258 (DIINNRPTSG…DYQPLSPPRE (198 aa)) are disordered. 2 stretches are compositionally biased toward polar residues: residues 62 to 74 (IINN…SKLT) and 89 to 107 (VTPT…NILS). Composition is skewed to basic and acidic residues over residues 111–123 (EKGH…RDDD) and 131–150 (VEKH…KENS). The residue at position 159 (tyrosine 159) is a Phosphotyrosine. Phosphoserine occurs at positions 160 and 162. Threonine 177 is subject to Phosphothreonine. Residues serine 212 and serine 222 each carry the phosphoserine modification. A compositionally biased stretch (acidic residues) spans 212–226 (SEDEDEEENYSDDDD). The region spanning 259–320 (LDPDKLYALY…PAEILETFPE (62 aa)) is the SH3 domain. Residues 334–367 (SSQSVASSDSKDDSISSGNKNQSDAESIIPTPAL) form a disordered region. Phosphoserine is present on residues serine 376, serine 378, and serine 401. Over residues 396-406 (DTSLDSNDDGG) the composition is skewed to acidic residues. Disordered stretches follow at residues 396-421 (DTSL…DNDK), 464-510 (NVKK…SDYD), 525-571 (ANGM…SSRA), and 600-680 (ASLG…PASK). Positions 470–504 (RQDNKNESEPKTSSSKDREDDYNANRYVGQEKSEP) are enriched in basic and acidic residues. Phosphoserine is present on serine 507. Residues 531 to 552 (SDSQNSLSTIGEFSPSSSEWTN) show a composition bias toward polar residues. Residues 553–569 (ESPSTPIVEESSSIPSS) show a composition bias toward low complexity. The segment covering 600–614 (ASLGSSGGMANQTDA) has biased composition (polar residues). Residues 615-633 (EQPKEELEKHHSTPEEEKQ) show a composition bias toward basic and acidic residues. A phosphoserine mark is found at serine 655, serine 658, and serine 670. Positions 655-671 (SSASINSSLSGSRALSN) are enriched in low complexity.

In terms of assembly, interacts with GLC7.

Functionally, important for bud site selection. Seems to be a regulatory subunit of the BUD14-GLC7 type-I phosphatase complex. The BUD14-GLC7 complex is necessary to regulate microtubule dynamics at the cortex and may function as a specific activator of the dynein complex. The protein is Bud site selection protein 14 (BUD14) of Saccharomyces cerevisiae (strain ATCC 204508 / S288c) (Baker's yeast).